The following is an 88-amino-acid chain: Small ribosomal subunit protein uS15 (88 aa).

The span at Met1–Asp20 shows a compositional bias: basic and acidic residues. Residues Met1–Thr21 are disordered.

This sequence belongs to the universal ribosomal protein uS15 family. Part of the 30S ribosomal subunit. Forms a bridge to the 50S subunit in the 70S ribosome, contacting the 23S rRNA.

Functionally, one of the primary rRNA binding proteins, it binds directly to 16S rRNA where it helps nucleate assembly of the platform of the 30S subunit by binding and bridging several RNA helices of the 16S rRNA. Forms an intersubunit bridge (bridge B4) with the 23S rRNA of the 50S subunit in the ribosome. This chain is Small ribosomal subunit protein uS15, found in Syntrophotalea carbinolica (strain DSM 2380 / NBRC 103641 / GraBd1) (Pelobacter carbinolicus).